A 65-amino-acid chain; its full sequence is Large ribosomal subunit protein bL35 (65 aa).

Residues 1–28 form a disordered region; sequence MPKLKTRKAAARRFKATGSGKIKRRKAF.

This sequence belongs to the bacterial ribosomal protein bL35 family.

The chain is Large ribosomal subunit protein bL35 from Trichodesmium erythraeum (strain IMS101).